Consider the following 324-residue polypeptide: MLDILTSHLINPLAYAVPVLIAVAFLTLVERKVLGYMQLRKGPNVMGPRGLLQSVADGVKLFIKEPIRPSMASPILFLTAPVLALILAMMLWAPMPMPYPVLDLNLGILFIMAISSLAVYSILGSGWASNSKYALIGALRAVAQTISYEVSLGLILLSAVIFSGGYTLQTFNTTQEDTWLLLPLWPLAIMWFISTLAETNRAPFDLTEGESELVSGFNVEYAAGPFALFFLAEYSNILLMNTHSTVLFLGASFTPDAPELMTISIATKTAMLSILFLWMRASYPRFRYDQLMHLIWKNFLPITLVLVLWHIALPIALAGLPPQT.

8 helical membrane passes run 9-29 (LINPLAYAVPVLIAVAFLTLV), 75-95 (ILFLTAPVLALILAMMLWAPM), 106-126 (LGILFIMAISSLAVYSILGSG), 146-166 (ISYEVSLGLILLSAVIFSGGY), 178-198 (TWLLLPLWPLAIMWFISTLAE), 212-232 (ELVSGFNVEYAAGPFALFFLA), 259-279 (ELMTISIATKTAMLSILFLWM), and 299-319 (FLPITLVLVLWHIALPIALAG).

The protein belongs to the complex I subunit 1 family. As to quaternary structure, core subunit of respiratory chain NADH dehydrogenase (Complex I) which is composed of 45 different subunits.

The protein resides in the mitochondrion inner membrane. The enzyme catalyses a ubiquinone + NADH + 5 H(+)(in) = a ubiquinol + NAD(+) + 4 H(+)(out). In terms of biological role, core subunit of the mitochondrial membrane respiratory chain NADH dehydrogenase (Complex I) which catalyzes electron transfer from NADH through the respiratory chain, using ubiquinone as an electron acceptor. Essential for the catalytic activity and assembly of complex I. This Danio rerio (Zebrafish) protein is NADH-ubiquinone oxidoreductase chain 1 (mt-nd1).